The primary structure comprises 384 residues: S-adenosylmethionine synthase (384 aa).

H15 contributes to the ATP binding site. D17 provides a ligand contact to Mg(2+). Position 43 (E43) interacts with K(+). Residues E56 and Q99 each contribute to the L-methionine site. Residues Q99–R109 are flexible loop. ATP is bound by residues D164 to K166, R230 to F231, D239, R245 to K246, A262, and K266. D239 contributes to the L-methionine binding site. K270 serves as a coordination point for L-methionine.

The protein belongs to the AdoMet synthase family. As to quaternary structure, homotetramer; dimer of dimers. It depends on Mg(2+) as a cofactor. Requires K(+) as cofactor.

The protein localises to the cytoplasm. The enzyme catalyses L-methionine + ATP + H2O = S-adenosyl-L-methionine + phosphate + diphosphate. It participates in amino-acid biosynthesis; S-adenosyl-L-methionine biosynthesis; S-adenosyl-L-methionine from L-methionine: step 1/1. Catalyzes the formation of S-adenosylmethionine (AdoMet) from methionine and ATP. The overall synthetic reaction is composed of two sequential steps, AdoMet formation and the subsequent tripolyphosphate hydrolysis which occurs prior to release of AdoMet from the enzyme. The protein is S-adenosylmethionine synthase of Salmonella agona (strain SL483).